The chain runs to 233 residues: Orotidine 5'-phosphate decarboxylase (233 aa).

Residues D13, K35, 62–71 (DLKFHDIPNT), T122, R182, Q191, G211, and R212 contribute to the substrate site. Residue K64 is the Proton donor of the active site.

Belongs to the OMP decarboxylase family. Type 1 subfamily. As to quaternary structure, homodimer.

It catalyses the reaction orotidine 5'-phosphate + H(+) = UMP + CO2. It participates in pyrimidine metabolism; UMP biosynthesis via de novo pathway; UMP from orotate: step 2/2. In terms of biological role, catalyzes the decarboxylation of orotidine 5'-monophosphate (OMP) to uridine 5'-monophosphate (UMP). The polypeptide is Orotidine 5'-phosphate decarboxylase (Pseudomonas putida (strain ATCC 700007 / DSM 6899 / JCM 31910 / BCRC 17059 / LMG 24140 / F1)).